A 195-amino-acid polypeptide reads, in one-letter code: 3-isopropylmalate dehydratase small subunit (195 aa).

The protein belongs to the LeuD family. LeuD type 1 subfamily. As to quaternary structure, heterodimer of LeuC and LeuD.

It catalyses the reaction (2R,3S)-3-isopropylmalate = (2S)-2-isopropylmalate. The protein operates within amino-acid biosynthesis; L-leucine biosynthesis; L-leucine from 3-methyl-2-oxobutanoate: step 2/4. Its function is as follows. Catalyzes the isomerization between 2-isopropylmalate and 3-isopropylmalate, via the formation of 2-isopropylmaleate. The polypeptide is 3-isopropylmalate dehydratase small subunit (Corynebacterium kroppenstedtii (strain DSM 44385 / JCM 11950 / CIP 105744 / CCUG 35717)).